Consider the following 200-residue polypeptide: Somatotropin (200 aa).

Residues 1–22 (MARVLVVLSVVVASLFFSQGAT) form the signal peptide. H38 is a Zn(2+) binding site. C71 and C173 form a disulfide bridge. E182 lines the Zn(2+) pocket. A disulfide bridge connects residues C190 and C198.

Belongs to the somatotropin/prolactin family.

It localises to the secreted. In terms of biological role, growth hormone plays an important role in growth control and is involved in the regulation of several anabolic processes. Implicated as an osmoregulatory substance important for seawater adaptation. The chain is Somatotropin (gh) from Pangasianodon gigas (Mekong giant catfish).